The following is a 158-amino-acid chain: NAD(P)H-quinone oxidoreductase subunit J, chloroplastic (158 aa).

The protein belongs to the complex I 30 kDa subunit family. As to quaternary structure, NDH is composed of at least 16 different subunits, 5 of which are encoded in the nucleus.

The protein resides in the plastid. It localises to the chloroplast thylakoid membrane. The catalysed reaction is a plastoquinone + NADH + (n+1) H(+)(in) = a plastoquinol + NAD(+) + n H(+)(out). It carries out the reaction a plastoquinone + NADPH + (n+1) H(+)(in) = a plastoquinol + NADP(+) + n H(+)(out). Functionally, NDH shuttles electrons from NAD(P)H:plastoquinone, via FMN and iron-sulfur (Fe-S) centers, to quinones in the photosynthetic chain and possibly in a chloroplast respiratory chain. The immediate electron acceptor for the enzyme in this species is believed to be plastoquinone. Couples the redox reaction to proton translocation, and thus conserves the redox energy in a proton gradient. The sequence is that of NAD(P)H-quinone oxidoreductase subunit J, chloroplastic from Nicotiana tabacum (Common tobacco).